The following is a 611-amino-acid chain: Chaperone protein HtpG (611 aa).

Residues 1–326 (MSETLERHAF…TEDLPLNVSR (326 aa)) form an a; substrate-binding region. Residues 327 to 536 (EMLQATPVLA…SGGPDLQMQR (210 aa)) form a b region. A c region spans residues 537–611 (LLRRAGRGFG…RVATALAAQG (75 aa)).

The protein belongs to the heat shock protein 90 family. As to quaternary structure, homodimer.

It is found in the cytoplasm. Functionally, molecular chaperone. Has ATPase activity. The chain is Chaperone protein HtpG from Methylobacterium nodulans (strain LMG 21967 / CNCM I-2342 / ORS 2060).